The sequence spans 100 residues: MITQERLLKVLRAPHISEKATMAAEKANTIVFKVAKDATKKEIKAAVEQLFEVEVKSVNTLITKGKTKRQGLRQGRRSDVKKAYVTLKEGQDLDFVGGAE.

This sequence belongs to the universal ribosomal protein uL23 family. In terms of assembly, part of the 50S ribosomal subunit. Contacts protein L29, and trigger factor when it is bound to the ribosome.

Its function is as follows. One of the early assembly proteins it binds 23S rRNA. One of the proteins that surrounds the polypeptide exit tunnel on the outside of the ribosome. Forms the main docking site for trigger factor binding to the ribosome. The polypeptide is Large ribosomal subunit protein uL23 (Vibrio vulnificus (strain CMCP6)).